A 1036-amino-acid polypeptide reads, in one-letter code: MGSISHLPAYGHRLLPVLIDEIARDEPDRVLFYTPRNGQPSQGYDEVNTKIFANSINRLCGWLDSQLGSPAGPRTIAYIGQNDLRYFIMMIASTKLGHRLLLSSPRNSVEGHVSLIKQSGCEFWIASSGLDHHEFLQDLQIPSVEAPELPQLLDPTPVKPYVYQKSWNEGKSDVLALLHTSGSTGLPKLVPVYLETAATVDGFHLMEPTNGKRPTGVEWTGTRQLCAMPLFHVAGICLGLYSAVFFNWTVVLPSVGPIMQHVIEDALDHISLDSAFISPSVLQDISKSPRVLEKLSKLKFITSAGGPIPQSVGDLIHPRVPIMQTMGMTEGQWLASVVTHPDEWAYYYFHPRTGVEMRPYSEDLSELVFVQNPKLSATQPVFKTFPELDIWETKDLYSRHPKHPDLWKYEMRRDDLIILSNGEKFNPLAAEGKLISHPWIAAAYLTGRGRFQTAALLYPDENSLDKSDDIITDNVWPTFEEVNKSLPAFAQIHRDFVKIVRTPFPRTPKGTLARNETEKAFTADINAIYDRSTHGKPSVHINGTTEDVVRSGIREAIETVSGLVDLKDDDNIFTRGFDSLHVIRLAGLLSSAFDQPLEVEAGTIYTNPTISQLAHTVWSHLEHGPQDKVHHSEVTREMLAKYAQAFEPPREAKEHIVLTGTTGEIGSYLLDVLCNNDKVAKVWCLNRSADAFQRQVDSAKSKGLSSSWKSKAKFVRYDVASENLGLSQDGLEEIKNEATAIIHNAWEVNFNLPLSSFEPQFIGLKSLVDVCRESRQKIRFFFVSSISAAMNWPSDLLGPVPEASIPRFDAPINGYGSSKLVAEHLLSKAARSGVLSLSILRVGQVAGPVKTLGEGSIWTRRDWVPAIIDASAHLRALPLDLGSASILDWIPIDLLTEVIGQLVVPVNPVVGQENYYNLLNPRTPSWTDSLPGLKARLEASFSDTFEIIPLQEWISRLRGAEKTIVKEVSEGSSETAIRAQSGLKLLAFFEMLASGKEGSRGLEWAKANTLAQSSFLACMEPVSSAWFDTWLKQWGY.

Positions 21–343 are adenylation (A) domain; it reads EIARDEPDRV…LASVVTHPDE (323 aa). In terms of domain architecture, Carrier spans 544–621; it reads TTEDVVRSGI…QLAHTVWSHL (78 aa). Serine 579 is subject to O-(pantetheine 4'-phosphoryl)serine. The segment at 658–899 is thioester reductase (TR) domain; sequence LTGTTGEIGS…IPIDLLTEVI (242 aa).

The protein operates within mycotoxin biosynthesis. In terms of biological role, non-canonical non-ribosomal peptide synthetase; part of the gene cluster that mediates the biosynthesis of fusaric acid, a mycotoxin with low to moderate toxicity to animals and humans, but with high phytotoxic properties. L-aspartate is suggested as fusaric acid amino acid precursor that is activated and further processed to O-acetyl-L-homoserine by cluster enzymes aspartate kinase FUB3 and homoserine O-acetyltransferase FUB5, as well as enzymes of the primary metabolism. The polyketide synthase (PKS) FUB1 generates the triketide trans-2-hexenal which is presumptively released by the hydrolase FUB4 and linked to the NRPS-bound amino acid precursor by NAD(P)-dependent dehydrogenase FUB6. FUB1, FUB4, and the non-canonical NRPS Fub8 may form an enzyme complex. Further processing of the NRPS-bound intermediate might be carried out by FUB6 and the sulfhydrylase FUB7, enabling a spontaneous electrocyclization to close the carbon backbone of fusaric acid. Dihydrofusaric acid is likely to be released via reduction by the thioester reductase (TR) domain of FUB8 whereupon the final oxidation to fusaric acid may (also) be performed by the FMN-dependent dehydrogenase FUB9. In Fusarium oxysporum f. sp. lycopersici (strain 4287 / CBS 123668 / FGSC 9935 / NRRL 34936) (Fusarium vascular wilt of tomato), this protein is Non-canonical non-ribosomal peptide synthetase FUB8.